A 761-amino-acid chain; its full sequence is Xaa-Pro dipeptidyl-peptidase (761 aa).

Active-site charge relay system residues include Ser347, Asp467, and His497.

It belongs to the peptidase S15 family. In terms of assembly, homodimer.

It localises to the cytoplasm. The catalysed reaction is Hydrolyzes Xaa-Pro-|- bonds to release unblocked, N-terminal dipeptides from substrates including Ala-Pro-|-p-nitroanilide and (sequentially) Tyr-Pro-|-Phe-Pro-|-Gly-Pro-|-Ile.. Functionally, removes N-terminal dipeptides sequentially from polypeptides having unsubstituted N-termini provided that the penultimate residue is proline. The sequence is that of Xaa-Pro dipeptidyl-peptidase from Streptococcus agalactiae serotype III (strain NEM316).